A 397-amino-acid chain; its full sequence is MKILAAMSGGVDSAVAAARAVDAGHDVTGVHLALSRMPGTLRTGSRGCCTVEDSMDARRAADLLGIPFYVWDFSERFAADVVDDFVAEYQAGRTPNPCMRCNERIKFAALLEKALDLGFDAVCTGHYADVLPGPDGQPELHRAAAWAKDQSYVLGVLTAEQIAHSYFPLGSTPSKAEVRAEAAARGIQVAQKPDSHDICFIPDGDTRGWLADRVGAEPGDILDGEGNAIGTHQGAAAFTVGQRKGLAIGTPAPDGRPRFVLEIRPKDNTVVVGPQEALAIREIAGSSYTWAGTPPTRPDQPFDCDVQIRAHADPVPARAAVSVVDGSMQLVITPRDPLHGVAPGQTAVVYAGTRVLGQVTIDRTVSAVADARPPVRDAGPADAAPAAAALVGATAGE.

ATP-binding positions include 6–13 and Leu-32; that span reads AMSGGVDS. Cys-101 (nucleophile) is an active-site residue. A disulfide bridge connects residues Cys-101 and Cys-199. Gly-125 is an ATP binding site. Residues 148-150 are interaction with tRNA; sequence KDQ. The Cysteine persulfide intermediate role is filled by Cys-199.

Belongs to the MnmA/TRMU family.

It is found in the cytoplasm. The catalysed reaction is S-sulfanyl-L-cysteinyl-[protein] + uridine(34) in tRNA + AH2 + ATP = 2-thiouridine(34) in tRNA + L-cysteinyl-[protein] + A + AMP + diphosphate + H(+). Functionally, catalyzes the 2-thiolation of uridine at the wobble position (U34) of tRNA, leading to the formation of s(2)U34. This chain is tRNA-specific 2-thiouridylase MnmA, found in Clavibacter sepedonicus (Clavibacter michiganensis subsp. sepedonicus).